A 253-amino-acid polypeptide reads, in one-letter code: Amino-acid-binding protein AabA (253 aa).

An N-terminal signal peptide occupies residues 1 to 23 (MPFLKTLFRGALCSIACGASLFC).

This sequence belongs to the bacterial solute-binding protein 3 family.

The protein resides in the periplasm. In Dichelobacter nodosus (Bacteroides nodosus), this protein is Amino-acid-binding protein AabA (aabA).